The chain runs to 237 residues: MSNKDIFVKISGSKKIREAREKVKSDTLYNLTSAVERLKSASYVKFDPTLEIVMKLGIDPRHSDQIVRGVVNLPAGTGKIIRVAVICKEEREEEAKSAGADLVGSINIIDEIKSGQINFDVCIATPDMMSMISSVARILGPKGLMPNPKLGTVTLDIKNAIKNAKSGQVEYRAEKAGIIHAGLGKLSFSDQDLLKNLNAFIGAVIKAKPVGLKGSYLKAIYLSSTMGASVQIDLTSI.

This sequence belongs to the universal ribosomal protein uL1 family. As to quaternary structure, part of the 50S ribosomal subunit.

In terms of biological role, binds directly to 23S rRNA. The L1 stalk is quite mobile in the ribosome, and is involved in E site tRNA release. Its function is as follows. Protein L1 is also a translational repressor protein, it controls the translation of the L11 operon by binding to its mRNA. This Rickettsia typhi (strain ATCC VR-144 / Wilmington) protein is Large ribosomal subunit protein uL1.